The sequence spans 338 residues: Erlin-2 (338 aa).

At 1-3 (MAQ) the chain is on the cytoplasmic side. Residues 4–24 (LGAVVAVAASFFCASLFSAVH) form a helical membrane-spanning segment. At 25–338 (KIEEGHIGVY…DEPMEADSEN (314 aa)) the chain is on the lumenal side. A glycan (N-linked (GlcNAc...) asparagine) is linked at Asn-106. Residues 177–309 (EAIRRNYELM…DIPNMFMDSA (133 aa)) form an interaction with ERLIN1 region. An N6-acetyllysine modification is found at Lys-267.

Belongs to the band 7/mec-2 family. Forms a heteromeric complex with ERLIN1. In complex with ERLIN1, interacts with RNF170. Interacts with activated ITPR1, independently of the degree of ITPR1 polyubiquitination. Interacts with SCAP, INSIG1, SREBF1 and SREBF2 under cholesterol sufficiency conditions; indicative for an association with the SCAP-SREBP-INSIG complex. Probably part of an AMFR/gp78 and INSIG1-containing ubiquitin ligase complex involved in ERAD of HMGCR. Interacts with TMUB1; TMUB1 bridges the association with AMFR. Interacts with SYVN1 and RNF139. Interacts with TMEM259. Interacts with TMEM41B. Deubiquitinated by USP25; leading to stabilization.

The protein localises to the endoplasmic reticulum membrane. Component of the ERLIN1/ERLIN2 complex which mediates the endoplasmic reticulum-associated degradation (ERAD) of inositol 1,4,5-trisphosphate receptors (IP3Rs) such as ITPR1. Promotes sterol-accelerated ERAD of HMGCR probably implicating an AMFR/gp78-containing ubiquitin ligase complex. Involved in regulation of cellular cholesterol homeostasis by regulation the SREBP signaling pathway. May promote ER retention of the SCAP-SREBF complex. This chain is Erlin-2 (ERLIN2), found in Bos taurus (Bovine).